The following is a 230-amino-acid chain: C-reactive protein (230 aa).

Positions 1 to 19 (MEKLLWCLLITISFSQAFG) are cleaved as a signal peptide. A Pentraxin (PTX) domain is found at 24-223 (SKQAFVFPGV…DVFIKPQLWP (200 aa)). Residues Cys55 and Cys114 are joined by a disulfide bond. Asn78 contributes to the Ca(2+) binding site. N-linked (GlcNAc...) asparagine glycosylation is present at Asn147. 4 residues coordinate Ca(2+): Glu155, Gln156, Asp157, and Gln167. Cys227 and Cys228 are oxidised to a cystine.

This sequence belongs to the pentraxin family. As to quaternary structure, homopentamer; disulfide-linked. Pentraxin (or pentaxin) have a discoid arrangement of 5 non-covalently bound subunits. Two of the five chains form a dimer linked by two interchain disulfide bonds located in the C-terminal heptapeptide and specific to rat CRP. Interacts with FCN1; may regulate monocyte activation by FCN1. The cofactor is Ca(2+). The last two cysteines are involved either in interchain disulfide bonds or in an intrachain bond. As to expression, found in plasma.

The protein resides in the secreted. In terms of biological role, displays several functions associated with host defense: it promotes agglutination, bacterial capsular swelling, phagocytosis and complement fixation through its calcium-dependent binding to phosphorylcholine. Can interact with DNA and histones and may scavenge nuclear material released from damaged circulating cells. In Rattus norvegicus (Rat), this protein is C-reactive protein (Crp).